The chain runs to 130 residues: Small ribosomal subunit protein uS8 (130 aa).

Belongs to the universal ribosomal protein uS8 family. In terms of assembly, part of the 30S ribosomal subunit. Contacts proteins S5 and S12.

One of the primary rRNA binding proteins, it binds directly to 16S rRNA central domain where it helps coordinate assembly of the platform of the 30S subunit. This is Small ribosomal subunit protein uS8 from Hahella chejuensis (strain KCTC 2396).